Reading from the N-terminus, the 743-residue chain is 1,4-alpha-glucan branching enzyme GlgB (743 aa).

Asp-416 functions as the Nucleophile in the catalytic mechanism. Catalysis depends on Glu-469, which acts as the Proton donor.

This sequence belongs to the glycosyl hydrolase 13 family. GlgB subfamily. As to quaternary structure, monomer.

It catalyses the reaction Transfers a segment of a (1-&gt;4)-alpha-D-glucan chain to a primary hydroxy group in a similar glucan chain.. It functions in the pathway glycan biosynthesis; glycogen biosynthesis. Functionally, catalyzes the formation of the alpha-1,6-glucosidic linkages in glycogen by scission of a 1,4-alpha-linked oligosaccharide from growing alpha-1,4-glucan chains and the subsequent attachment of the oligosaccharide to the alpha-1,6 position. The chain is 1,4-alpha-glucan branching enzyme GlgB from Shewanella baltica (strain OS185).